Reading from the N-terminus, the 520-residue chain is Beta-galactoside-specific lectin 4 (520 aa).

Residue N107 is glycosylated (N-linked (GlcNAc...) asparagine). E159 is a catalytic residue. A disulfide bond links C240 and C266. A propeptide spans 241 to 265 (GERPSSSDVRYWPLVIRPVIADDVT) (connecting peptide). Residues 269-396 (SEPTVRIVGR…YTLGQGWLAG (128 aa)) enclose the Ricin B-type lectin 1 domain. 284–286 (DVR) is a D-galactose binding site. N322 is a glycosylation site (N-linked (GlcNAc...) asparagine). C325 and C342 are oxidised to a cystine. Residues N357 and N397 are each glycosylated (N-linked (GlcNAc...) asparagine). Residues 400–520 (APREVTIYGF…KPNQMWLPVP (121 aa)) enclose the Ricin B-type lectin 2 domain. 2 disulfides stabilise this stretch: C413–C426 and C451–C467. A D-galactose-binding site is contributed by 494-496 (DVA).

Belongs to the ribosome-inactivating protein family. Type 2 RIP subfamily. Disulfide-linked dimer of A and B chains.

The catalysed reaction is Endohydrolysis of the N-glycosidic bond at one specific adenosine on the 28S rRNA.. Its function is as follows. The A chain is responsible for inhibiting protein synthesis through the catalytic inactivation of 60S ribosomal subunits by removing adenine from position 4,324 of 28S rRNA. The B chain binds to cell receptors and probably facilitates the entry into the cell of the A chain; B chains are also responsible for cell agglutination (lectin activity). Inhibits growth of the human tumor cell line Molt4. The chain is Beta-galactoside-specific lectin 4 from Viscum album (European mistletoe).